The following is a 601-amino-acid chain: Ubiquilin-4 (601 aa).

The Ubiquitin-like domain occupies 13–87 (IRVTVKTPKD…VHLVIKTPQK (75 aa)). Residues Lys23 and Lys62 each participate in a glycyl lysine isopeptide (Lys-Gly) (interchain with G-Cter in SUMO2) cross-link. The interval 87–155 (KAQDPAAATA…GAGEGSPSAT (69 aa)) is disordered. Over residues 88–138 (AQDPAAATASSPSTPDPASAPSTTPASPATPAQPSTSGSASSDAGSGSRRS) the composition is skewed to low complexity. Ser98 and Ser144 each carry phosphoserine. Residues 139–149 (SGGGPSPGAGE) are compositionally biased toward gly residues. 2 consecutive STI1 domains span residues 192–229 (NPEM…QQLM) and 230–261 (ERNP…MQEM). At Thr287 the chain carries Phosphothreonine. Positions 301–366 (FGNNPFSSLA…QVHPTVSNPF (66 aa)) are disordered. Residues 307 to 318 (SSLAGNSDSSSS) show a composition bias toward low complexity. Ser318 carries the phosphoserine; by ATM modification. Over residues 329-340 (LPNPWSPSPPTS) the composition is skewed to pro residues. The span at 344–354 (GSGGEGTGGSG) shows a compositional bias: gly residues. Residues 357–366 (QVHPTVSNPF) are compositionally biased toward polar residues. STI1 domains are found at residues 393–440 (NPQL…QEQL) and 444–476 (LPVF…QQGL). Residues 490 to 533 (LGSFGISRTPAPSAGSNAGSTPEAPTSSPATPATSSPTGASSAQ) are disordered. The segment covering 507–533 (AGSTPEAPTSSPATPATSSPTGASSAQ) has biased composition (low complexity). The UBA domain maps to 553–598 (QTPEVRFQQQLEQLNSMGFINREANLQALIATGGDINAAIERLLGS).

Homooligomer. Binds signal sequences of proteins that are targeted to the endoplasmic reticulum. Interacts (via UBA domain) with GJA1 (not ubiquitinated) and with ubiquitin; both compete for the same binding site. Interacts (via UBA domain) with ubiquitin and with polyubiquitin chains. Interacts (via ubiquitin-like domain) with PSMD2 and PSMD4, regulatory subunits of the 26S proteasome. Interacts with ATXN1/SCA1; interaction with ATXN1 inhibits polyubiquitination of UBQLN4 and interferes with PSMD4 binding. Interacts with HERPUD1. Interacts (via ubiquitin-like domain) with UBQLN1 (via UBA domain). Interacts with UBQLN2. Interacts (via STI1 1 and 2 domains) with MAP1LC3A/B/C. Interacts with BAG6. Interacts with MRE11 (when ubiquitinated); interaction with ubiquitinated MRE11 leads to MRE11 removal from chromatin. Interacts with DESI1/POST; leading to nuclear export. Interacts with BCL2A1 and BCL2L10. In terms of assembly, (Microbial infection) Interacts with Mumps virus protein SH. Post-translationally, phosphorylated by ATM at Ser-318 in response to DNA damage, leading to localization in the nucleus and recruitment to sites of DNA damage. Ubiquitinated; this does not lead to proteasomal degradation. May undergo both 'Lys-48'- and 'Lys-63'-linked polyubiquitination. In terms of tissue distribution, highly expressed in pancreas, kidney, skeletal muscle, heart and throughout the brain, and at lower levels in placenta, lung and liver.

It is found in the nucleus. The protein resides in the cytoplasm. The protein localises to the chromosome. Its subcellular location is the endoplasmic reticulum. It localises to the perinuclear region. It is found in the cytoplasmic vesicle. The protein resides in the autophagosome. Regulator of protein degradation that mediates the proteasomal targeting of misfolded, mislocalized or accumulated proteins. Acts by binding polyubiquitin chains of target proteins via its UBA domain and by interacting with subunits of the proteasome via its ubiquitin-like domain. Key regulator of DNA repair that represses homologous recombination repair: in response to DNA damage, recruited to sites of DNA damage following phosphorylation by ATM and acts by binding and removing ubiquitinated MRE11 from damaged chromatin, leading to MRE11 degradation by the proteasome. MRE11 degradation prevents homologous recombination repair, redirecting double-strand break repair toward non-homologous end joining (NHEJ). Specifically recognizes and binds mislocalized transmembrane-containing proteins and targets them to proteasomal degradation. Collaborates with DESI1/POST in the export of ubiquitinated proteins from the nucleus to the cytoplasm. Also plays a role in the regulation of the proteasomal degradation of non-ubiquitinated GJA1. Acts as an adapter protein that recruits UBQLN1 to the autophagy machinery. Mediates the association of UBQLN1 with autophagosomes and the autophagy-related protein LC3 (MAP1LC3A/B/C) and may assist in the maturation of autophagosomes to autolysosomes by mediating autophagosome-lysosome fusion. The polypeptide is Ubiquilin-4 (Homo sapiens (Human)).